The sequence spans 485 residues: Zinc finger protein 639 (485 aa).

Residues 1-14 (MNEYPKKRKRKTLH) show a composition bias toward basic residues. Disordered stretches follow at residues 1–23 (MNEYPKKRKRKTLHPSRYSDSSG) and 54–80 (DNKDDDSDPETANDLPKFADGTKARNR). Ser60 is modified (phosphoserine). Lys76 is covalently cross-linked (Glycyl lysine isopeptide (Lys-Gly) (interchain with G-Cter in SUMO2)). Phosphoserine is present on Ser88. Residues 115–136 (ASPESVHQHTQEESPIEVHTSE) form a disordered region. Glycyl lysine isopeptide (Lys-Gly) (interchain with G-Cter in SUMO2) cross-links involve residues Lys177, Lys181, and Lys226. 8 C2H2-type zinc fingers span residues 204-227 (YKCELCEFNSKYFSDLKQHVILKH), 233-255 (NVCRVCKESFSTNMLLIEHAKLH), 260-283 (YICKYCDYKTVIFENLSQHIADTH), 289-311 (YWCEQCDVQFSSSSELYLHFQEH), 374-397 (FVCQVCGFRSRLHTNVNRHVAIEH), 403-425 (HVCDDCGKGFSSMLEYCKHLNSH), 431-454 (YLCQYCEYSTGQIDDLKIHLDFKH), and 460-482 (HKCSECLMRFGNERDLLGHLQVH). An interaction with CTNNA2 region spans residues 371–455 (KNFFVCQVCG…LKIHLDFKHS (85 aa)).

It belongs to the krueppel C2H2-type zinc-finger protein family. In terms of assembly, interacts with CTNNA2.

It is found in the nucleus. In terms of biological role, binds DNA and may function as a transcriptional repressor. This chain is Zinc finger protein 639 (Znf639), found in Mus musculus (Mouse).